Here is a 215-residue protein sequence, read N- to C-terminus: Peroxiredoxin 1 (215 aa).

A Thioredoxin domain is found at 1–157; sequence MKLYQKFPET…LLRITKAALV (157 aa). Catalysis depends on cysteine 45, which acts as the Cysteine sulfenic acid (-SOH) intermediate. Arginine 120 is a binding site for substrate.

It belongs to the peroxiredoxin family. Prx6 subfamily. As to quaternary structure, homodecamer. Pentamer of dimers that assemble into a ring structure.

It is found in the cytoplasm. It carries out the reaction a hydroperoxide + [thioredoxin]-dithiol = an alcohol + [thioredoxin]-disulfide + H2O. Its function is as follows. Thiol-specific peroxidase that catalyzes the reduction of hydrogen peroxide and organic hydroperoxides to water and alcohols, respectively. Plays a role in cell protection against oxidative stress by detoxifying peroxides. This chain is Peroxiredoxin 1, found in Sulfuracidifex metallicus (Sulfolobus metallicus).